The chain runs to 291 residues: Flavonol synthase/flavanone 3-hydroxylase (291 aa).

The Fe2OG dioxygenase domain occupies 151-250 (CWYVMNINHY…RMSWPVLVSP (100 aa)). Positions 175, 177, and 231 each coordinate Fe cation.

It belongs to the iron/ascorbate-dependent oxidoreductase family. The cofactor is L-ascorbate. It depends on Fe cation as a cofactor.

It is found in the cytoplasm. The catalysed reaction is a (2R,3R)-dihydroflavonol + 2-oxoglutarate + O2 = a flavonol + succinate + CO2 + H2O. The enzyme catalyses a (2S)-flavan-4-one + 2-oxoglutarate + O2 = a (2R,3R)-dihydroflavonol + succinate + CO2. Its pathway is secondary metabolite biosynthesis; flavonoid biosynthesis. Catalyzes the formation of flavonols from dihydroflavonols. It can act on dihydrokaempferol to produce kaempferol, on dihydroquercetin to produce quercitin and on dihydromyricetin to produce myricetin. This chain is Flavonol synthase/flavanone 3-hydroxylase, found in Matthiola incana (Common stock).